The following is a 381-amino-acid chain: Diguanylate cyclase DosC (381 aa).

Residue H98 coordinates heme. Residues T325–S381 enclose the GGDEF domain. D333 is a binding site for Mg(2+). 2 residues coordinate substrate: N341 and D350.

Requires heme as cofactor. The cofactor is Mg(2+).

It catalyses the reaction 2 GTP = 3',3'-c-di-GMP + 2 diphosphate. It functions in the pathway purine metabolism; 3',5'-cyclic di-GMP biosynthesis. Globin-coupled heme-based oxygen sensor protein displaying diguanylate cyclase (DGC) activity in response to oxygen availability. Thus, catalyzes the synthesis of cyclic diguanylate (c-di-GMP) via the condensation of 2 GTP molecules. Cyclic-di-GMP is a second messenger which controls cell surface-associated traits in bacteria. This is Diguanylate cyclase DosC (dosC) from Shigella flexneri.